Here is a 306-residue protein sequence, read N- to C-terminus: Metal ABC transporter substrate-binding lipoprotein SloC (306 aa).

Residues 1 to 19 (MKKLSLLLLVCLSLLGLFA) form the signal peptide. Cys-20 carries the N-palmitoyl cysteine lipid modification. A lipid anchor (S-diacylglycerol cysteine) is attached at Cys-20. The a divalent metal cation site is built by His-64, His-136, Glu-202, and Asp-277.

Belongs to the bacterial solute-binding protein 9 family. Lipoprotein receptor antigen (Lrai) subfamily.

It is found in the cell membrane. Functionally, part of the ATP-binding cassette (ABC) transport system SloABC involved in metal import. Binds a metal with high affinity and specificity and delivers it to the membrane permease for translocation into the cytoplasm. May act as an adhesin which is involved on adherence to extracellular matrix. It is an important factor in pathogenesis and infection. May contribute to the formation and accumulation of dental plaque. The chain is Metal ABC transporter substrate-binding lipoprotein SloC (sloC) from Streptococcus mutans serotype c (strain ATCC 700610 / UA159).